The sequence spans 201 residues: 3-isopropylmalate dehydratase small subunit (201 aa).

Belongs to the LeuD family. LeuD type 1 subfamily. As to quaternary structure, heterodimer of LeuC and LeuD.

The enzyme catalyses (2R,3S)-3-isopropylmalate = (2S)-2-isopropylmalate. The protein operates within amino-acid biosynthesis; L-leucine biosynthesis; L-leucine from 3-methyl-2-oxobutanoate: step 2/4. Functionally, catalyzes the isomerization between 2-isopropylmalate and 3-isopropylmalate, via the formation of 2-isopropylmaleate. This Cytophaga hutchinsonii (strain ATCC 33406 / DSM 1761 / CIP 103989 / NBRC 15051 / NCIMB 9469 / D465) protein is 3-isopropylmalate dehydratase small subunit.